Reading from the N-terminus, the 194-residue chain is Small ribosomal subunit protein uS4 (194 aa).

Lysine 66 bears the N6-acetyllysine mark. Lysine 93 is covalently cross-linked (Glycyl lysine isopeptide (Lys-Gly) (interchain with G-Cter in SUMO2)). Positions 108–182 (RRLQTQVFKL…VKRKNAKKGQ (75 aa)) constitute an S4 RNA-binding domain. N6-acetyllysine is present on lysine 116. Residue lysine 139 forms a Glycyl lysine isopeptide (Lys-Gly) (interchain with G-Cter in SUMO2) linkage. Serine 153 is modified (phosphoserine). Lysine 155 carries the N6-acetyllysine modification. The segment at 162 to 194 (RSPYGGGRPGRVKRKNAKKGQGGAGAGDDEEED) is disordered. Serine 163 is subject to Phosphoserine.

It belongs to the universal ribosomal protein uS4 family. As to quaternary structure, component of the small ribosomal subunit. Part of the small subunit (SSU) processome, composed of more than 70 proteins and the RNA chaperone small nucleolar RNA (snoRNA) U3.

It is found in the cytoplasm. The protein resides in the nucleus. The protein localises to the nucleolus. Its function is as follows. Component of the small ribosomal subunit. The ribosome is a large ribonucleoprotein complex responsible for the synthesis of proteins in the cell. Part of the small subunit (SSU) processome, first precursor of the small eukaryotic ribosomal subunit. During the assembly of the SSU processome in the nucleolus, many ribosome biogenesis factors, an RNA chaperone and ribosomal proteins associate with the nascent pre-rRNA and work in concert to generate RNA folding, modifications, rearrangements and cleavage as well as targeted degradation of pre-ribosomal RNA by the RNA exosome. The sequence is that of Small ribosomal subunit protein uS4 (RPS9) from Papio anubis (Olive baboon).